The sequence spans 128 residues: Glycine cleavage system H protein (128 aa).

The Lipoyl-binding domain occupies 22–104 (VATVGITEHA…YGEGWIFKMK (83 aa)). An N6-lipoyllysine modification is found at Lys-63.

Belongs to the GcvH family. As to quaternary structure, the glycine cleavage system is composed of four proteins: P, T, L and H. The cofactor is (R)-lipoate.

The glycine cleavage system catalyzes the degradation of glycine. The H protein shuttles the methylamine group of glycine from the P protein to the T protein. The polypeptide is Glycine cleavage system H protein (Methylacidiphilum infernorum (isolate V4) (Methylokorus infernorum (strain V4))).